The primary structure comprises 325 residues: Ribonucleoside-diphosphate reductase small chain (325 aa).

Fe cation is bound by residues Asp76, Glu107, and His110. Residue Tyr114 is part of the active site. Residues Glu170, Glu204, and His207 each contribute to the Fe cation site.

It belongs to the ribonucleoside diphosphate reductase small chain family. In terms of assembly, heterodimer of a large and a small subunit. It depends on Fe cation as a cofactor.

The catalysed reaction is a 2'-deoxyribonucleoside 5'-diphosphate + [thioredoxin]-disulfide + H2O = a ribonucleoside 5'-diphosphate + [thioredoxin]-dithiol. Functionally, provides the precursors necessary for DNA synthesis. Catalyzes the biosynthesis of deoxyribonucleotides from the corresponding ribonucleotides. This chain is Ribonucleoside-diphosphate reductase small chain, found in Encephalitozoon cuniculi (strain GB-M1) (Microsporidian parasite).